Here is a 643-residue protein sequence, read N- to C-terminus: NADH-ubiquinone oxidoreductase chain 5 (643 aa).

Helical transmembrane passes span 7 to 27 (IIIL…VFFF), 64 to 84 (LLKT…IFNI), 114 to 134 (TFLS…YYYM), 140 to 160 (PNNF…LTST), 163 to 183 (IFLL…LISW), 208 to 228 (ILLF…PEIF), 230 to 250 (ISAP…AAAG), 277 to 297 (SSTM…LYAC), 301 to 321 (FNTW…TTAI), 338 to 358 (LGLM…FHIC), 398 to 418 (AACI…PGFY), 437 to 457 (IVLS…IIFF), 486 to 506 (ALGT…VPII), 511 to 531 (VLKT…ISIL), 555 to 575 (FYEN…SLSL), and 615 to 635 (YLLF…TTIS).

Belongs to the complex I subunit 5 family.

The protein localises to the mitochondrion inner membrane. The catalysed reaction is a ubiquinone + NADH + 5 H(+)(in) = a ubiquinol + NAD(+) + 4 H(+)(out). Its function is as follows. Core subunit of the mitochondrial membrane respiratory chain NADH dehydrogenase (Complex I) that is believed to belong to the minimal assembly required for catalysis. Complex I functions in the transfer of electrons from NADH to the respiratory chain. The immediate electron acceptor for the enzyme is believed to be ubiquinone. This Patiria pectinifera (Starfish) protein is NADH-ubiquinone oxidoreductase chain 5 (ND5).